Reading from the N-terminus, the 256-residue chain is Alcohol dehydrogenase (256 aa).

12–35 (FVAGLGGIGLDTSKELVKRDLKNL) is an NAD(+) binding site. Ser140 provides a ligand contact to substrate. The active-site Proton acceptor is Tyr153.

The protein belongs to the short-chain dehydrogenases/reductases (SDR) family. In terms of assembly, homodimer.

It carries out the reaction a primary alcohol + NAD(+) = an aldehyde + NADH + H(+). It catalyses the reaction a secondary alcohol + NAD(+) = a ketone + NADH + H(+). In Drosophila tsacasi (Fruit fly), this protein is Alcohol dehydrogenase (Adh).